The following is a 1644-amino-acid chain: Terminal uridylyltransferase 4 (1644 aa).

Disordered regions lie at residues 30–60 (SNQTLKPRNDKSEIGTSSLNRNSSKKTKQND) and 75–277 (AASV…EMDY). The residue at position 102 (S102) is a Phosphoserine. A compositionally biased stretch (polar residues) spans 108–123 (KGSSQTKLEKTPSLQT). S131 carries the post-translational modification Phosphoserine. 2 stretches are compositionally biased toward polar residues: residues 146–156 (AEATTEKALNS) and 163–174 (TPTSQMKLQKTP). Residue S176 is modified to Phosphoserine. Composition is skewed to polar residues over residues 194–209 (QTESQQTGKKLTSSFV) and 226–242 (LENSSLSQKQQTQTDNI). Basic and acidic residues predominate over residues 258 to 272 (DLSKMKSEESNKENS). The tract at residues 273–353 (SEMDYLENAT…KEKRHKKNIL (81 aa)) is required for interaction with LIN28A and pre-let-7 RNA. Zn(2+) contacts are provided by C326, C329, H342, and H348. The segment covering 603 to 623 (IADENKAKADEPKDDTKKTET) has biased composition (basic and acidic residues). The interval 603-640 (IADENKAKADEPKDDTKKTETDNQSNAAKAKHGKSPLT) is disordered. A PAP-associated 1 domain is found at 649–698 (LGQLWLELLKFYTLDFALEEYVICVRIQDILTRENKNWPKRRIAIEDPFS). Disordered stretches follow at residues 733-759 (KGGNKSTMDPKKKEKGKLSSKKPVKSD) and 812-841 (HGQDSSSLSTASGGSDLKQKSAEKQGDLTP). Residues 745 to 755 (KEKGKLSSKKP) show a composition bias toward basic residues. A compositionally biased stretch (low complexity) spans 815-827 (DSSSLSTASGGSD). Basic and acidic residues predominate over residues 828 to 837 (LKQKSAEKQG). Residues 918-1634 (DKFILTSGKP…CATRRCRERC (717 aa)) are sufficient for monouridylation activity. Residues 930–947 (IVCSICKKDGHSKNDCPE) form a CCHC-type 1 zinc finger. UTP contacts are provided by residues 1015–1018 (SSKN), 1025–1028 (SDLD), N1098, K1120, 1138–1142 (SYAYI), and H1254. Positions 1026 and 1028 each coordinate Mg(2+). Positions 1201-1254 (SLGELWLGLLRFYTEEFDFKEYVISIRQKKLLTTFEKQWTSKCIAIEDPFDLNH) constitute a PAP-associated 2 domain. Residues 1310-1327 (RCCRVCGKIGHYMKDCPK) form a CCHC-type 2 zinc finger. Residues 1329–1350 (KRLKKKDSEEEKEGNEEEKDSR) are disordered. Residues 1358-1375 (LRCFICGDAGHVRRECPE) form a CCHC-type 3 zinc finger. The span at 1402–1427 (AGSAQQQSDQSIRTRQSSECSDSPSY) shows a compositional bias: low complexity. The disordered stretch occupies residues 1402 to 1483 (AGSAQQQSDQ…LYNFPQSPPA (82 aa)). The segment covering 1428–1450 (SPQPQPFPQNSPQPSALPPPPSQ) has biased composition (pro residues). Over residues 1451–1473 (PGSQPKLGPPQQGGQPPHQVQMP) the composition is skewed to low complexity. R1624 is subject to Omega-N-methylarginine.

It belongs to the DNA polymerase type-B-like family. In terms of assembly, interacts with LIN28A in the presence of pre-let-7 RNA. Interacts with T2BP. Interacts with MOV10; the interaction is RNA-dependent. It depends on Mg(2+) as a cofactor. Mn(2+) is required as a cofactor. Ubiquitously expressed.

It localises to the nucleus. The protein resides in the cytoplasm. It is found in the cytoplasmic ribonucleoprotein granule. The catalysed reaction is RNA(n) + UTP = RNA(n)-3'-uridine ribonucleotide + diphosphate. Functionally, uridylyltransferase that mediates the terminal uridylation of mRNAs with short (less than 25 nucleotides) poly(A) tails, hence facilitating global mRNA decay. Essential for both oocyte maturation and fertility. Through 3' terminal uridylation of mRNA, sculpts, with TUT7, the maternal transcriptome by eliminating transcripts during oocyte growth. Involved in microRNA (miRNA)-induced gene silencing through uridylation of deadenylated miRNA targets. Also functions as an integral regulator of microRNA biogenesiS using 3 different uridylation mechanisms. Acts as a suppressor of miRNA biogenesis by mediating the terminal uridylation of some miRNA precursors, including that of let-7 (pre-let-7), miR107, miR-143 and miR-200c. Uridylated miRNAs are not processed by Dicer and undergo degradation. Degradation of pre-let-7 contributes to the maintenance of embryonic stem (ES) cell pluripotency. Also catalyzes the 3' uridylation of miR-26A, a miRNA that targets IL6 transcript. This abrogates the silencing of IL6 transcript, hence promoting cytokine expression. In the absence of LIN28A, TUT7 and TUT4 monouridylate group II pre-miRNAs, which includes most of pre-let7 members, that shapes an optimal 3' end overhang for efficient processing. Add oligo-U tails to truncated pre-miRNAS with a 5' overhang which may promote rapid degradation of non-functional pre-miRNA species. May also suppress Toll-like receptor-induced NF-kappa-B activation via binding to T2BP. Does not play a role in replication-dependent histone mRNA degradation. Due to functional redundancy between TUT4 and TUT7, the identification of the specific role of each of these proteins is difficult. TUT4 and TUT7 restrict retrotransposition of long interspersed element-1 (LINE-1) in cooperation with MOV10 counteracting the RNA chaperonne activity of L1RE1. TUT7 uridylates LINE-1 mRNAs in the cytoplasm which inhibits initiation of reverse transcription once in the nucleus, whereas uridylation by TUT4 destabilizes mRNAs in cytoplasmic ribonucleoprotein granules. The chain is Terminal uridylyltransferase 4 from Mus musculus (Mouse).